The sequence spans 506 residues: Phase 2 flagellin (506 aa).

The protein belongs to the bacterial flagellin family.

It is found in the secreted. It localises to the bacterial flagellum. Flagellin is the subunit protein which polymerizes to form the filaments of bacterial flagella. The protein is Phase 2 flagellin (fljB) of Salmonella typhimurium (strain LT2 / SGSC1412 / ATCC 700720).